A 198-amino-acid chain; its full sequence is Ribonuclease HII (198 aa).

An RNase H type-2 domain is found at 10–198 (HLVAGVDEVG…PVKRALGLVS (189 aa)). Residues Asp16, Glu17, and Asp108 each coordinate a divalent metal cation.

Belongs to the RNase HII family. Mn(2+) serves as cofactor. It depends on Mg(2+) as a cofactor.

The protein resides in the cytoplasm. It carries out the reaction Endonucleolytic cleavage to 5'-phosphomonoester.. Functionally, endonuclease that specifically degrades the RNA of RNA-DNA hybrids. This is Ribonuclease HII from Salmonella paratyphi A (strain AKU_12601).